Reading from the N-terminus, the 149-residue chain is Nucleoside diphosphate kinase (149 aa).

Positions 9, 57, 85, 91, 102, and 112 each coordinate ATP. His115 acts as the Pros-phosphohistidine intermediate in catalysis.

This sequence belongs to the NDK family. Homotetramer. Requires Mg(2+) as cofactor.

The protein resides in the cytoplasm. It carries out the reaction a 2'-deoxyribonucleoside 5'-diphosphate + ATP = a 2'-deoxyribonucleoside 5'-triphosphate + ADP. It catalyses the reaction a ribonucleoside 5'-diphosphate + ATP = a ribonucleoside 5'-triphosphate + ADP. Its function is as follows. Major role in the synthesis of nucleoside triphosphates other than ATP. The ATP gamma phosphate is transferred to the NDP beta phosphate via a ping-pong mechanism, using a phosphorylated active-site intermediate. This is Nucleoside diphosphate kinase from Carboxydothermus hydrogenoformans (strain ATCC BAA-161 / DSM 6008 / Z-2901).